A 286-amino-acid chain; its full sequence is Pheromone receptor transcription factor (286 aa).

Ser-2 bears the N-acetylserine mark. Ser-2 is modified (phosphoserine). Residues 18-72 (RRKIEIKFIENKTRRHVTFSKRKHGIMKKAFELSVLTGTQVLLLVVSETGLVYTF) form the MADS-box domain. Acidic residues predominate over residues 97 to 119 (PDDEEEDEEEDGDDDDDDDDDGN). The segment at 97–137 (PDDEEEDEEEDGDDDDDDDDDGNDMQRQQPQQQQPQQQQQV) is disordered. Residues 122 to 136 (QRQQPQQQQPQQQQQ) are compositionally biased toward low complexity. At Ser-144 the chain carries Phosphoserine. The tract at residues 167–264 (LGGANPNQNS…QQAFANAASP (98 aa)) is disordered. Residues 171 to 246 (NPNQNSMIQQ…QQQQQQQQQP (76 aa)) show a composition bias toward low complexity.

As to quaternary structure, homodimer. Binds DNA with a high specificity in complex with mating-type protein ALPHA1. Also binds DNA with a high specificity as a heterotetramer consisting of an ALPHA2 dimer and an MCM1 dimer. Interacts with YHP1 and YOX1, possibly leading to its inactivation. Interacts with ARG80 and ARG82.

The protein resides in the nucleus. In terms of biological role, transcription factor required for the efficient replication of minichromosomes and the transcriptional regulation of early cell cycle genes. Activates transcription of ECB-dependent genes during the G1/M phase. Genes that contain a ECB (early cell box) element in their transcription regulatory region are transcribed only during G1/M phases. Interacts with the alpha-2 repressor or with the alpha-1 activator thereby regulating the expression of mating-type-specific genes. With ARG80, ARG81 and ARG82, coordinates the expression of arginine anabolic and catabolic genes in response to arginine. The sequence is that of Pheromone receptor transcription factor (MCM1) from Saccharomyces cerevisiae (strain ATCC 204508 / S288c) (Baker's yeast).